The chain runs to 329 residues: Glycerol-3-phosphate dehydrogenase [NAD(P)+] (329 aa).

Positions 10, 11, 31, and 105 each coordinate NADPH. Positions 105, 134, and 136 each coordinate sn-glycerol 3-phosphate. A138 contacts NADPH. Sn-glycerol 3-phosphate contacts are provided by K189, D242, S252, R253, and N254. The Proton acceptor role is filled by K189. Residue R253 participates in NADPH binding. The NADPH site is built by V277 and E279.

This sequence belongs to the NAD-dependent glycerol-3-phosphate dehydrogenase family.

Its subcellular location is the cytoplasm. The enzyme catalyses sn-glycerol 3-phosphate + NAD(+) = dihydroxyacetone phosphate + NADH + H(+). It carries out the reaction sn-glycerol 3-phosphate + NADP(+) = dihydroxyacetone phosphate + NADPH + H(+). It functions in the pathway membrane lipid metabolism; glycerophospholipid metabolism. Its function is as follows. Catalyzes the reduction of the glycolytic intermediate dihydroxyacetone phosphate (DHAP) to sn-glycerol 3-phosphate (G3P), the key precursor for phospholipid synthesis. This Neisseria meningitidis serogroup C (strain 053442) protein is Glycerol-3-phosphate dehydrogenase [NAD(P)+].